A 507-amino-acid polypeptide reads, in one-letter code: ATP synthase subunit alpha (507 aa).

168–175 is a binding site for ATP; the sequence is GDRKTGKT.

Belongs to the ATPase alpha/beta chains family. In terms of assembly, F-type ATPases have 2 components, CF(1) - the catalytic core - and CF(0) - the membrane proton channel. CF(1) has five subunits: alpha(3), beta(3), gamma(1), delta(1), epsilon(1). CF(0) has three main subunits: a(1), b(2) and c(9-12). The alpha and beta chains form an alternating ring which encloses part of the gamma chain. CF(1) is attached to CF(0) by a central stalk formed by the gamma and epsilon chains, while a peripheral stalk is formed by the delta and b chains.

It is found in the cell inner membrane. It catalyses the reaction ATP + H2O + 4 H(+)(in) = ADP + phosphate + 5 H(+)(out). In terms of biological role, produces ATP from ADP in the presence of a proton gradient across the membrane. The alpha chain is a regulatory subunit. This chain is ATP synthase subunit alpha, found in Ehrlichia ruminantium (strain Gardel).